The chain runs to 126 residues: Holo-[acyl-carrier-protein] synthase (126 aa).

Residues Asp9 and Glu58 each coordinate Mg(2+).

The protein belongs to the P-Pant transferase superfamily. AcpS family. Mg(2+) is required as a cofactor.

The protein localises to the cytoplasm. The catalysed reaction is apo-[ACP] + CoA = holo-[ACP] + adenosine 3',5'-bisphosphate + H(+). Transfers the 4'-phosphopantetheine moiety from coenzyme A to a Ser of acyl-carrier-protein. In Vibrio vulnificus (strain YJ016), this protein is Holo-[acyl-carrier-protein] synthase.